Here is a 332-residue protein sequence, read N- to C-terminus: Ketol-acid reductoisomerase (NADP(+)) (332 aa).

Positions 1 to 182 constitute a KARI N-terminal Rossmann domain; it reads MATIYYEKDA…GCTRAGVLAT (182 aa). NADP(+)-binding positions include 25 to 28, Arg-48, Ser-53, and 83 to 86; these read YGSQ and DELQ. Residue His-108 is part of the active site. Gly-134 is an NADP(+) binding site. Residues 183–328 form the KARI C-terminal knotted domain; sequence TFKEETETDL…KELRSMMPWL (146 aa). Mg(2+) contacts are provided by Asp-191, Glu-195, Glu-227, and Glu-231. A substrate-binding site is contributed by Ser-252.

This sequence belongs to the ketol-acid reductoisomerase family. It depends on Mg(2+) as a cofactor.

It carries out the reaction (2R)-2,3-dihydroxy-3-methylbutanoate + NADP(+) = (2S)-2-acetolactate + NADPH + H(+). The catalysed reaction is (2R,3R)-2,3-dihydroxy-3-methylpentanoate + NADP(+) = (S)-2-ethyl-2-hydroxy-3-oxobutanoate + NADPH + H(+). It functions in the pathway amino-acid biosynthesis; L-isoleucine biosynthesis; L-isoleucine from 2-oxobutanoate: step 2/4. The protein operates within amino-acid biosynthesis; L-valine biosynthesis; L-valine from pyruvate: step 2/4. In terms of biological role, involved in the biosynthesis of branched-chain amino acids (BCAA). Catalyzes an alkyl-migration followed by a ketol-acid reduction of (S)-2-acetolactate (S2AL) to yield (R)-2,3-dihydroxy-isovalerate. In the isomerase reaction, S2AL is rearranged via a Mg-dependent methyl migration to produce 3-hydroxy-3-methyl-2-ketobutyrate (HMKB). In the reductase reaction, this 2-ketoacid undergoes a metal-dependent reduction by NADPH to yield (R)-2,3-dihydroxy-isovalerate. The protein is Ketol-acid reductoisomerase (NADP(+)) of Methanocella arvoryzae (strain DSM 22066 / NBRC 105507 / MRE50).